The sequence spans 417 residues: Acetate kinase (417 aa).

Residue Asn7 coordinates Mg(2+). Lys14 serves as a coordination point for ATP. Residue Arg104 participates in substrate binding. Asp162 functions as the Proton donor/acceptor in the catalytic mechanism. ATP contacts are provided by residues 222 to 226 (HLGNG), 297 to 299 (DMR), and 346 to 350 (GIGEN). Glu401 serves as a coordination point for Mg(2+).

Belongs to the acetokinase family. As to quaternary structure, homodimer. Mg(2+) serves as cofactor. It depends on Mn(2+) as a cofactor.

The protein resides in the cytoplasm. The enzyme catalyses acetate + ATP = acetyl phosphate + ADP. It functions in the pathway metabolic intermediate biosynthesis; acetyl-CoA biosynthesis; acetyl-CoA from acetate: step 1/2. In terms of biological role, catalyzes the formation of acetyl phosphate from acetate and ATP. Can also catalyze the reverse reaction. The chain is Acetate kinase from Chloroherpeton thalassium (strain ATCC 35110 / GB-78).